The following is a 390-amino-acid chain: Probable tRNA pseudouridine synthase D (390 aa).

Catalysis depends on D93, which acts as the Nucleophile. Positions 166–353 (HVLNYFGIQR…YGTRRKLITP (188 aa)) constitute a TRUD domain.

It belongs to the pseudouridine synthase TruD family.

The enzyme catalyses uridine(13) in tRNA = pseudouridine(13) in tRNA. In terms of biological role, could be responsible for synthesis of pseudouridine from uracil-13 in transfer RNAs. The protein is Probable tRNA pseudouridine synthase D of Methanococcus vannielii (strain ATCC 35089 / DSM 1224 / JCM 13029 / OCM 148 / SB).